The chain runs to 272 residues: MLTMNNLLMVLVQALRQHRWLCLFGVAYIFSSVGNGLTQTLILGQLLRWHAPPSTLTLTYMLATLPGFIGSYLGAMMYFVTYYLGSASYFMWMLAAHILGKAAGSLLAKRLTRNFNKVQIFGYCAVLAGVLSIALFFAPKSVFVLVPLTFIISTLYQATTTLMWVMMADVADYGEWSQGKRMDGIIFSTFLAVLKLGMALSGAIVGWTLGFSGYVANAPEQTSLAMHCIVALFTVVPGLLSLAAFATLRWYKLDDQTMQEINLAKMQTIVKG.

Belongs to the sodium:galactoside symporter (TC 2.A.2) family.

This is an uncharacterized protein from Pseudescherichia vulneris (Escherichia vulneris).